The sequence spans 200 residues: NADH-quinone oxidoreductase subunit C (200 aa).

Belongs to the complex I 30 kDa subunit family. As to quaternary structure, NDH-1 is composed of 14 different subunits. Subunits NuoB, C, D, E, F, and G constitute the peripheral sector of the complex.

The protein resides in the cell inner membrane. It catalyses the reaction a quinone + NADH + 5 H(+)(in) = a quinol + NAD(+) + 4 H(+)(out). Functionally, NDH-1 shuttles electrons from NADH, via FMN and iron-sulfur (Fe-S) centers, to quinones in the respiratory chain. The immediate electron acceptor for the enzyme in this species is believed to be ubiquinone. Couples the redox reaction to proton translocation (for every two electrons transferred, four hydrogen ions are translocated across the cytoplasmic membrane), and thus conserves the redox energy in a proton gradient. The protein is NADH-quinone oxidoreductase subunit C of Cereibacter sphaeroides (strain ATCC 17029 / ATH 2.4.9) (Rhodobacter sphaeroides).